The following is a 314-amino-acid chain: Peroxisome biogenesis factor 10 (314 aa).

Over 1-7 (MNTYVAE) the chain is Peroxisomal matrix. A helical transmembrane segment spans residues 8 to 37 (IGEIVRSQRRDEEYIEDITERLSRVSKELL). Residue Gly38 is a topological domain, cytoplasmic. Residues 39–60 (QRTWIRWFPYLKSIASTLYYTS) traverse the membrane as a helical segment. Topologically, residues 61–90 (TVVLGNQTLGEEYVHLFESNGLERTVPSIP) are peroxisomal matrix. A helical transmembrane segment spans residues 91 to 110 (SRISFVLLHSAFPLISNYLI). Topologically, residues 111 to 142 (QKAESTLTHPSTESFLGIPIRKNQKARQSFLD) are cytoplasmic. Residues 143–166 (VFFWLRTKLFPQLQRAHIALFYIT) form a helical membrane-spanning segment. Topologically, residues 167-197 (GAYYSIARRFTGIRFLSASAHSDIPALKVYR) are peroxisomal matrix. Residues 198–218 (FLGYITLIQLAVSIGISLYSF) traverse the membrane as a helical segment. The Cytoplasmic portion of the chain corresponds to 219 to 314 (LEQEKFNNKL…PRDVTPLLNL (96 aa)). Positions 255, 258, 269, 271, 274, 277, 296, and 299 each coordinate Zn(2+). The RING-type zinc finger occupies 255-300 (CSICLENKNPSALFCGHLFCWTCIQEHAVAATSSASTSSARCPQCR).

Belongs to the pex2/pex10/pex12 family. As to quaternary structure, component of the PEX2-PEX10-PEX12 retrotranslocation channel.

The protein resides in the peroxisome membrane. It catalyses the reaction S-ubiquitinyl-[E2 ubiquitin-conjugating enzyme]-L-cysteine + [acceptor protein]-L-lysine = [E2 ubiquitin-conjugating enzyme]-L-cysteine + N(6)-ubiquitinyl-[acceptor protein]-L-lysine.. It participates in protein modification; protein ubiquitination. Its activity is regulated as follows. The E3 ubiquitin-protein ligase activity is stimulated by PEX12/prx-12. Its function is as follows. E3 ubiquitin-protein ligase component of a retrotranslocation channel required for peroxisome organization by mediating export of the PEX5/prx-5 receptor from peroxisomes to the cytosol, thereby promoting PEX5/prx-5 recycling. The retrotranslocation channel is composed of PEX2/prx-2, PEX10/prx-10 and PEX12/prx-12; each subunit contributing transmembrane segments that coassemble into an open channel that specifically allows the passage of PEX5/prx-5 through the peroxisomal membrane. PEX10/prx-10 also regulates PEX5 recycling by acting as a E3 ubiquitin-protein ligase. When PEX5/prx-5 recycling is compromised, PEX10/prx-10 catalyzes polyubiquitination of PEX5/prx-5 during its passage through the retrotranslocation channel, leading to its degradation. The protein is Peroxisome biogenesis factor 10 of Caenorhabditis elegans.